Here is a 179-residue protein sequence, read N- to C-terminus: Acireductone dioxygenase (179 aa).

His-85, His-87, Glu-91, and His-132 together coordinate Fe(2+). Residues His-85, His-87, Glu-91, and His-132 each coordinate Ni(2+).

The protein belongs to the acireductone dioxygenase (ARD) family. Requires Fe(2+) as cofactor. The cofactor is Ni(2+).

Its subcellular location is the cytoplasm. It is found in the nucleus. It carries out the reaction 1,2-dihydroxy-5-(methylsulfanyl)pent-1-en-3-one + O2 = 4-methylsulfanyl-2-oxobutanoate + formate + 2 H(+). It catalyses the reaction 1,2-dihydroxy-5-(methylsulfanyl)pent-1-en-3-one + O2 = 3-(methylsulfanyl)propanoate + CO + formate + 2 H(+). It participates in amino-acid biosynthesis; L-methionine biosynthesis via salvage pathway; L-methionine from S-methyl-5-thio-alpha-D-ribose 1-phosphate: step 5/6. In terms of biological role, catalyzes 2 different reactions between oxygen and the acireductone 1,2-dihydroxy-3-keto-5-methylthiopentene (DHK-MTPene) depending upon the metal bound in the active site. Fe-containing acireductone dioxygenase (Fe-ARD) produces formate and 2-keto-4-methylthiobutyrate (KMTB), the alpha-ketoacid precursor of methionine in the methionine recycle pathway. Ni-containing acireductone dioxygenase (Ni-ARD) produces methylthiopropionate, carbon monoxide and formate, and does not lie on the methionine recycle pathway. The sequence is that of Acireductone dioxygenase from Saccharomyces cerevisiae (strain ATCC 204508 / S288c) (Baker's yeast).